Here is a 402-residue protein sequence, read N- to C-terminus: D-galactonate dehydratase family member EGBG_02030 (402 aa).

D207 lines the Mg(2+) pocket. H209 is a D-arabinonate binding site. Mg(2+) is bound by residues E233 and E259. D-arabinonate-binding residues include E259, R280, H309, and E336.

It belongs to the mandelate racemase/muconate lactonizing enzyme family. GalD subfamily.

Its function is as follows. Has no detectable activity with D-mannonate and with a panel of 70 other acid sugars (in vitro), in spite of the conservation of the residues that are expected to be important for catalytic activity and cofactor binding. May have evolved a divergent function. The sequence is that of D-galactonate dehydratase family member EGBG_02030 from Enterococcus gallinarum (strain EG2).